We begin with the raw amino-acid sequence, 177 residues long: Mitochondrial inner membrane protease subunit 2 (177 aa).

Residues 19-37 (FFVAVPVAVTFLDRVACVA) form a helical membrane-spanning segment. Active-site residues include serine 43 and lysine 91.

It belongs to the peptidase S26 family. IMP2 subfamily. As to quaternary structure, heterodimer of 2 subunits, IMMPL1 and IMMPL2.

It is found in the mitochondrion inner membrane. Catalyzes the removal of transit peptides required for the targeting of proteins from the mitochondrial matrix, across the inner membrane, into the inter-membrane space. Known to process the nuclear encoded protein DIABLO. The sequence is that of Mitochondrial inner membrane protease subunit 2 (IMMP2L) from Bos taurus (Bovine).